We begin with the raw amino-acid sequence, 117 residues long: Large ribosomal subunit protein bL19 (117 aa).

It belongs to the bacterial ribosomal protein bL19 family.

Functionally, this protein is located at the 30S-50S ribosomal subunit interface and may play a role in the structure and function of the aminoacyl-tRNA binding site. The polypeptide is Large ribosomal subunit protein bL19 (Shewanella denitrificans (strain OS217 / ATCC BAA-1090 / DSM 15013)).